Consider the following 534-residue polypeptide: 2,3-bisphosphoglycerate-independent phosphoglycerate mutase (534 aa).

Mn(2+) contacts are provided by aspartate 15 and serine 65. Serine 65 serves as the catalytic Phosphoserine intermediate. Residues histidine 126, 156–157, arginine 188, arginine 194, 260–263, and lysine 333 each bind substrate; these read RD and RPDR. Residues aspartate 400, histidine 404, aspartate 441, histidine 442, and histidine 459 each coordinate Mn(2+).

This sequence belongs to the BPG-independent phosphoglycerate mutase family. Monomer. It depends on Mn(2+) as a cofactor.

It catalyses the reaction (2R)-2-phosphoglycerate = (2R)-3-phosphoglycerate. It functions in the pathway carbohydrate degradation; glycolysis; pyruvate from D-glyceraldehyde 3-phosphate: step 3/5. Functionally, catalyzes the interconversion of 2-phosphoglycerate and 3-phosphoglycerate. The protein is 2,3-bisphosphoglycerate-independent phosphoglycerate mutase of Acaryochloris marina (strain MBIC 11017).